The sequence spans 378 residues: Enoyl-[acyl-carrier-protein] reductase 1, mitochondrial (378 aa).

The active-site Proton donor is the Tyr-59. Residues Asn-151, 180–183 (NSQV), 203–206 (RDGK), 284–287 (YGGM), 309–311 (YWL), and Lys-372 each bind NADP(+).

It belongs to the zinc-containing alcohol dehydrogenase family. Quinone oxidoreductase subfamily. Homodimer.

Its subcellular location is the mitochondrion matrix. The catalysed reaction is a 2,3-saturated acyl-[ACP] + NADP(+) = a (2E)-enoyl-[ACP] + NADPH + H(+). Functionally, catalyzes the NADPH-dependent reduction of trans-2-enoyl thioesters in mitochondrial fatty acid synthesis (fatty acid synthesis type II). Fatty acid chain elongation in mitochondria uses acyl carrier protein (ACP) as an acyl group carrier, but the enzyme accepts both ACP and CoA thioesters as substrates in vitro. Required for respiration and the maintenance of the mitochondrial compartment. The protein is Enoyl-[acyl-carrier-protein] reductase 1, mitochondrial (ETR1) of Debaryomyces hansenii (strain ATCC 36239 / CBS 767 / BCRC 21394 / JCM 1990 / NBRC 0083 / IGC 2968) (Yeast).